We begin with the raw amino-acid sequence, 391 residues long: Phosphoglycerate kinase (391 aa).

Substrate is bound by residues 21 to 23 (DLN), arginine 36, 59 to 62 (HLGR), arginine 114, and arginine 147. ATP-binding positions include lysine 198, glutamate 315, and 344-347 (GGDT).

The protein belongs to the phosphoglycerate kinase family. As to quaternary structure, monomer.

The protein resides in the cytoplasm. It carries out the reaction (2R)-3-phosphoglycerate + ATP = (2R)-3-phospho-glyceroyl phosphate + ADP. It functions in the pathway carbohydrate degradation; glycolysis; pyruvate from D-glyceraldehyde 3-phosphate: step 2/5. This is Phosphoglycerate kinase from Actinobacillus succinogenes (strain ATCC 55618 / DSM 22257 / CCUG 43843 / 130Z).